The sequence spans 443 residues: Thymidine phosphorylase (443 aa).

The protein belongs to the thymidine/pyrimidine-nucleoside phosphorylase family. In terms of assembly, homodimer.

The catalysed reaction is thymidine + phosphate = 2-deoxy-alpha-D-ribose 1-phosphate + thymine. Its pathway is pyrimidine metabolism; dTMP biosynthesis via salvage pathway; dTMP from thymine: step 1/2. The enzymes which catalyze the reversible phosphorolysis of pyrimidine nucleosides are involved in the degradation of these compounds and in their utilization as carbon and energy sources, or in the rescue of pyrimidine bases for nucleotide synthesis. The polypeptide is Thymidine phosphorylase (Shewanella putrefaciens (strain CN-32 / ATCC BAA-453)).